We begin with the raw amino-acid sequence, 599 residues long: Sulfite reductase [NADPH] flavoprotein alpha-component (599 aa).

Residues 64–202 (VTLISASQTG…AASEWRACVV (139 aa)) form the Flavodoxin-like domain. FMN contacts are provided by residues 70–75 (SQTGNA), 117–120 (STQG), and 153–162 (LGDTSYEFFC). The FAD-binding FR-type domain occupies 234–448 (DAPLTATLSV…IEHNDNFRLP (215 aa)). FAD contacts are provided by residues Thr322, Ala356, 386-389 (RLYS), 404-406 (TVG), Tyr410, and 419-422 (GGAS). Residues 519 to 520 (SR), 525 to 529 (KIYVQ), and Asp561 contribute to the NADP(+) site. Tyr599 is a binding site for FAD.

This sequence belongs to the NADPH-dependent sulphite reductase flavoprotein subunit CysJ family. It in the N-terminal section; belongs to the flavodoxin family. In the C-terminal section; belongs to the flavoprotein pyridine nucleotide cytochrome reductase family. As to quaternary structure, alpha(8)-beta(8). The alpha component is a flavoprotein, the beta component is a hemoprotein. FAD is required as a cofactor. The cofactor is FMN.

It carries out the reaction hydrogen sulfide + 3 NADP(+) + 3 H2O = sulfite + 3 NADPH + 4 H(+). The protein operates within sulfur metabolism; hydrogen sulfide biosynthesis; hydrogen sulfide from sulfite (NADPH route): step 1/1. Its function is as follows. Component of the sulfite reductase complex that catalyzes the 6-electron reduction of sulfite to sulfide. This is one of several activities required for the biosynthesis of L-cysteine from sulfate. The flavoprotein component catalyzes the electron flow from NADPH -&gt; FAD -&gt; FMN to the hemoprotein component. In Salmonella typhi, this protein is Sulfite reductase [NADPH] flavoprotein alpha-component.